We begin with the raw amino-acid sequence, 311 residues long: Mas-related G-protein coupled receptor member E (311 aa).

At 1-25 (MEPREAGQHAGAADGAQEDVAFNLV) the chain is on the extracellular side. A helical transmembrane segment spans residues 26–46 (ILSLTEGLGLGGLLGNGAVLW). Residues 47-63 (LLSSNVYRNPFAIYLLD) are Cytoplasmic-facing. A helical transmembrane segment spans residues 64–84 (VACADLIFLGCHMVAIIPDLL). Residues 85–95 (QGRLDFPGFVQ) lie on the Extracellular side of the membrane. A helical transmembrane segment spans residues 96-116 (TSLATLRFFCYIVGLSLLVAV). At 117 to 136 (SVEQCLAALFPAWYSCRRPR) the chain is on the cytoplasmic side. A helical membrane pass occupies residues 137–157 (HLTTCVCALTWACCLLLHLLL). Residues 158–177 (SGACTQFFGEPSRHLCRTLW) are Extracellular-facing. The helical transmembrane segment at 178–198 (LVAAVLLAVLCCTMCGASLML) threads the bilayer. Residues 199-216 (LLQVERGPQRPPPRGFPT) lie on the Cytoplasmic side of the membrane. The helical transmembrane segment at 217-237 (LILLAVLLFLFCGLPFGIYWL) threads the bilayer. The Extracellular segment spans residues 238 to 251 (SRNLLWHIPHYFYH). The chain crosses the membrane as a helical span at residues 252–272 (FSFLTAAVYCAAKPVVYFCLG). Residues 273 to 311 (SAQGRRLPLRLVLQRALGDEAELGAVRETSRRGLVDIAA) lie on the Cytoplasmic side of the membrane.

It belongs to the G-protein coupled receptor 1 family. Mas subfamily.

It localises to the cell membrane. Its function is as follows. Orphan receptor. May regulate nociceptor function and/or development, including the sensation or modulation of pain. The polypeptide is Mas-related G-protein coupled receptor member E (MRGPRE) (Macaca fascicularis (Crab-eating macaque)).